We begin with the raw amino-acid sequence, 77 residues long: U10-lycotoxin-Ls1b (77 aa).

Residues 1–20 (MKLIIFTGLVLFAIVSLIEA) form the signal peptide. A propeptide spanning residues 21–26 (EEESGR) is cleaved from the precursor.

The protein belongs to the neurotoxin 19 (CSTX) family. 09 (U10-Lctx) subfamily. In terms of processing, contains 4 disulfide bonds. Expressed by the venom gland.

The protein resides in the secreted. The chain is U10-lycotoxin-Ls1b from Lycosa singoriensis (Wolf spider).